We begin with the raw amino-acid sequence, 391 residues long: Phosphoglycerate kinase (391 aa).

Substrate-binding positions include 21-23 (DLN), arginine 36, 59-62 (HRGR), arginine 113, and arginine 146. Residues lysine 197, glutamate 314, and 340 to 343 (GGDT) each bind ATP.

It belongs to the phosphoglycerate kinase family. Monomer.

The protein resides in the cytoplasm. The catalysed reaction is (2R)-3-phosphoglycerate + ATP = (2R)-3-phospho-glyceroyl phosphate + ADP. The protein operates within carbohydrate degradation; glycolysis; pyruvate from D-glyceraldehyde 3-phosphate: step 2/5. This Ruthia magnifica subsp. Calyptogena magnifica protein is Phosphoglycerate kinase.